Consider the following 159-residue polypeptide: Type-1 angiotensin II receptor-associated protein (159 aa).

Residues 1-23 (MELPAVNLKVILLGHWLLTTWGC) are Extracellular-facing. Residues 24-44 (IVFSGSYAWANFTILALGVWA) form a helical membrane-spanning segment. The Cytoplasmic segment spans residues 45–55 (VAQRDSIDAIS). Residues 56 to 76 (MFLGGLLATIFLDIVHISIFY) traverse the membrane as a helical segment. Residues 77-86 (PRVSLTDTGR) lie on the Extracellular side of the membrane. The helical transmembrane segment at 87 to 107 (FGVGMAILSLLLKPLSCCFVY) threads the bilayer. Topologically, residues 108 to 159 (HMYRERGGELLVHTGFLGSSQDRSAYQTIDSAEAPADPFAVPEGRSQDARGY) are cytoplasmic. Residues 110–122 (YRERGGELLVHTG) are interaction with AGTR1. A phosphoserine mark is found at serine 126 and serine 127. Residue threonine 135 is modified to Phosphothreonine. 2 positions are modified to phosphoserine: serine 138 and serine 153. Residues 140–159 (EAPADPFAVPEGRSQDARGY) are disordered.

In terms of assembly, interacts with RACK1, and with the C-terminal region of AGTR1. Ubiquitous but more abundant in kidney, heart, pancreas and thyroid.

It is found in the endoplasmic reticulum membrane. Its subcellular location is the golgi apparatus membrane. The protein localises to the cytoplasmic vesicle membrane. Functionally, appears to be a negative regulator of type-1 angiotensin II receptor-mediated signaling by regulating receptor internalization as well as mechanism of receptor desensitization such as phosphorylation. Also induces a decrease in cell proliferation and angiotensin II-stimulated transcriptional activity. In Homo sapiens (Human), this protein is Type-1 angiotensin II receptor-associated protein (AGTRAP).